We begin with the raw amino-acid sequence, 122 residues long: MKPFLSIIFCFLVLGVDSQRWFQFMKEAGQGTRDMWRAYTDMREANWKNSDKYFHARGNYDAAQRGPGGAWAAKVISDAREGFKRMRGRGIEDSRADQFANEWGRSGKDPNFFRPPGLPSKY.

Residues 1–18 form the signal peptide; sequence MKPFLSIIFCFLVLGVDS. Gln19 bears the Pyrrolidone carboxylic acid mark. The tract at residues 100-122 is disordered; it reads ANEWGRSGKDPNFFRPPGLPSKY.

The protein belongs to the SAA family. In terms of assembly, apolipoprotein of the HDL complex. Expressed by the liver; secreted in plasma.

It localises to the secreted. Functionally, major acute phase reactant. The sequence is that of Serum amyloid A-2 protein (SAA2) from Mesocricetus auratus (Golden hamster).